The chain runs to 112 residues: Nitrogen regulatory protein P-II (112 aa).

Tyrosine 51 is subject to O-UMP-tyrosine.

The protein belongs to the P(II) protein family. In terms of assembly, homotrimer.

The protein resides in the plastid. The protein localises to the chloroplast. In terms of biological role, P-II indirectly controls the transcription of the glutamine synthetase gene (glnA). P-II prevents NR-II-catalyzed conversion of NR-I to NR-I-phosphate, the transcriptional activator of glnA. When P-II is uridylylated to P-II-UMP, these events are reversed. When the ratio of Gln to 2-ketoglutarate decreases, P-II is uridylylated to P-II-UMP, which causes the deadenylation of glutamine synthetase, so activating the enzyme. The sequence is that of Nitrogen regulatory protein P-II (glnB) from Pyropia yezoensis (Susabi-nori).